We begin with the raw amino-acid sequence, 417 residues long: Calreticulin (417 aa).

Residues 1 to 17 (MLLPVPLLLGLVGLAAA) form the signal peptide. The N-domain stretch occupies residues 18 to 197 (EPTIYFKEQF…NSQVESGSLE (180 aa)). Residues Gln-26, Lys-62, and Lys-64 each coordinate Ca(2+). Residue Lys-64 is modified to N6-(2-hydroxyisobutyryl)lysine. An alpha-D-glucoside is bound by residues Tyr-109, Lys-111, Tyr-128, and Asp-135. Cys-137 and Cys-163 are oxidised to a cystine. At Lys-159 the chain carries N6-acetyllysine. The 1-1 repeat unit spans residues 191–202 (VESGSLEDDWDF). The tract at residues 191–255 (VESGSLEDDW…DAKKPEDWDE (65 aa)) is 4 X approximate repeats. Positions 193 to 277 (SGSLEDDWDF…NPEYKGEWKP (85 aa)) are disordered. Positions 198–308 (DDWDFLPPKK…YSPDSNIYAY (111 aa)) are P-domain. Residues 207-251 (KIKDPDAVKPEDWDERAKIDDPTDSKPEDWDKPEHIPDPDAKKPE) show a composition bias toward basic and acidic residues. Lys-209 is modified (N6-acetyllysine). 6 repeat units span residues 210-221 (DPDAVKPEDWDE), 227-238 (DPTDSKPEDWDK), 244-255 (DPDAKKPEDWDE), 259-269 (GEWEPPVIQNP), 273-283 (GEWKPRQIDNP), and 287-297 (GTWIHPEIDNP). Positions 237–270 (DKPEHIPDPDAKKPEDWDEEMDGEWEPPVIQNPE) are interaction with PPIB. Residues 252 to 261 (DWDEEMDGEW) show a composition bias toward acidic residues. The tract at residues 259–297 (GEWEPPVIQNPEYKGEWKPRQIDNPDYKGTWIHPEIDNP) is 3 X approximate repeats. The segment at 309–417 (ENFAVLGLDL…AAAGQAKDEL (109 aa)) is C-domain. Asp-317 contacts an alpha-D-glucoside. Residue Asp-328 coordinates Ca(2+). The disordered stretch occupies residues 350–417 (TKAAEKQMKD…AAAGQAKDEL (68 aa)). The segment covering 352-379 (AAEKQMKDKQDEEQRLKEEEEEKKRKEE) has biased composition (basic and acidic residues). The segment covering 380 to 408 (EEVDKEDEEDKDEDEEEEDEKEEEEEEDA) has biased composition (acidic residues). Residues 414–417 (KDEL) carry the Prevents secretion from ER motif.

This sequence belongs to the calreticulin family. Monomer. Component of an EIF2 complex at least composed of CELF1/CUGBP1, CALR, CALR3, EIF2S1, EIF2S2, HSP90B1 and HSPA5. Interacts with PDIA3/ERp57 and SPACA9. Interacts with TRIM21. Interacts with NR3C1. Interacts with PPIB. Interacts (via P-domain) with PDIA5. Interacts with CLCC1. As to expression, in blastocyst expressed in all blastomeres (at protein level). In embryos, expressed in spleen, kidney, liver, fat, muscle, ovary, granulosa cells and cumulus cells.

Its subcellular location is the endoplasmic reticulum lumen. It is found in the cytoplasm. The protein resides in the cytosol. The protein localises to the secreted. It localises to the extracellular space. Its subcellular location is the extracellular matrix. It is found in the cell surface. The protein resides in the sarcoplasmic reticulum lumen. The protein localises to the cytoplasmic vesicle. It localises to the secretory vesicle. Its subcellular location is the cortical granule. It is found in the cytolytic granule. In terms of biological role, calcium-binding chaperone that promotes folding, oligomeric assembly and quality control in the endoplasmic reticulum (ER) via the calreticulin/calnexin cycle. This lectin interacts transiently with almost all of the monoglucosylated glycoproteins that are synthesized in the ER. Interacts with the DNA-binding domain of NR3C1 and mediates its nuclear export. Involved in maternal gene expression regulation. May participate in oocyte maturation via the regulation of calcium homeostasis. Present in the cortical granules of non-activated oocytes, is exocytosed during the cortical reaction in response to oocyte activation and might participate in the block to polyspermy. This chain is Calreticulin (CALR), found in Sus scrofa (Pig).